A 650-amino-acid chain; its full sequence is Chaperone protein DnaK (650 aa).

Position 200 is a phosphothreonine; by autocatalysis (Thr200). A compositionally biased stretch (low complexity) spans 611 to 636; sequence AQQAGAAGAAGAAEGAAHAGGAQQAA. Positions 611-637 are disordered; the sequence is AQQAGAAGAAGAAEGAAHAGGAQQAAD.

Belongs to the heat shock protein 70 family.

Acts as a chaperone. This is Chaperone protein DnaK from Burkholderia ambifaria (strain MC40-6).